Reading from the N-terminus, the 171-residue chain is Shikimate kinase (171 aa).

11–16 (GTGKTT) lines the ATP pocket. Thr15 serves as a coordination point for Mg(2+). Substrate is bound by residues Asp33, Arg57, and Gly79. Position 117 (Arg117) interacts with ATP. A substrate-binding site is contributed by Arg136.

Belongs to the shikimate kinase family. As to quaternary structure, monomer. The cofactor is Mg(2+).

It localises to the cytoplasm. The enzyme catalyses shikimate + ATP = 3-phosphoshikimate + ADP + H(+). The protein operates within metabolic intermediate biosynthesis; chorismate biosynthesis; chorismate from D-erythrose 4-phosphate and phosphoenolpyruvate: step 5/7. Catalyzes the specific phosphorylation of the 3-hydroxyl group of shikimic acid using ATP as a cosubstrate. This is Shikimate kinase from Caldanaerobacter subterraneus subsp. tengcongensis (strain DSM 15242 / JCM 11007 / NBRC 100824 / MB4) (Thermoanaerobacter tengcongensis).